Reading from the N-terminus, the 377-residue chain is GTP 3',8-cyclase (377 aa).

A disordered region spans residues 1–29 (MTTRLYLSPTPPRNDREGASKSTSASIKH). The Radical SAM core domain maps to 45–271 (RFGRIARDLR…FTLSPAKEPR (227 aa)). Residue Arg-54 coordinates GTP. Cys-61 and Cys-65 together coordinate [4Fe-4S] cluster. Tyr-67 contacts S-adenosyl-L-methionine. [4Fe-4S] cluster is bound at residue Cys-68. Residue Arg-105 coordinates GTP. Gly-109 lines the S-adenosyl-L-methionine pocket. Thr-140 is a GTP binding site. Ser-164 is an S-adenosyl-L-methionine binding site. A GTP-binding site is contributed by Lys-201. Residue Met-235 coordinates S-adenosyl-L-methionine. [4Fe-4S] cluster is bound by residues Cys-304 and Cys-307. GTP is bound at residue 309 to 311 (RSR). A [4Fe-4S] cluster-binding site is contributed by Cys-321.

This sequence belongs to the radical SAM superfamily. MoaA family. In terms of assembly, monomer and homodimer. The cofactor is [4Fe-4S] cluster.

It carries out the reaction GTP + AH2 + S-adenosyl-L-methionine = (8S)-3',8-cyclo-7,8-dihydroguanosine 5'-triphosphate + 5'-deoxyadenosine + L-methionine + A + H(+). It functions in the pathway cofactor biosynthesis; molybdopterin biosynthesis. In terms of biological role, catalyzes the cyclization of GTP to (8S)-3',8-cyclo-7,8-dihydroguanosine 5'-triphosphate. This Corynebacterium glutamicum (strain ATCC 13032 / DSM 20300 / JCM 1318 / BCRC 11384 / CCUG 27702 / LMG 3730 / NBRC 12168 / NCIMB 10025 / NRRL B-2784 / 534) protein is GTP 3',8-cyclase.